Consider the following 122-residue polypeptide: uncharacterized protein (122 aa).

A run of 3 helical transmembrane segments spans residues 21 to 40, 57 to 77, and 94 to 114; these read VWSW…SIAI, YTHM…CICI, and LLFS…YCIY.

It is found in the membrane. This is an uncharacterized protein from Saccharomyces cerevisiae (strain ATCC 204508 / S288c) (Baker's yeast).